A 418-amino-acid chain; its full sequence is MNLTTMGQAAKAAAFDLAVAPTAQKNKALAIIADELEANKDAILAANEKDIKAAVEAGISEAMQDRLLLTEERLVGIANDVRNVINLNDPVGSEIDSKVLENGMSLSRRRVPIGVIGVIYEARPNVTIDIASLCLKTGNASILRGGKETFFSNMELVKVIQVALEKAGLPAASVQYIEKPDRELVSQLLTMDDYVDMIIPRGGAGLHKMCKENSSIPVIIGGFGISHAFVDESADLERALVVVDNSKAQRPSACNALDTLLVHEAVAPQFLALLVNNMAGRVELVAEPKAYGLLKEFEGVSLREAQEGDFDTEWLSYTLGVKVVADVNEAAAHMQKHNASHSDTILTNNIESAEKFINTAGSAAVYVNASTRFTDGAQFGLGAEVAVSTQKLHARGPMGLEELTSYKWVGKADYLIRS.

The protein belongs to the gamma-glutamyl phosphate reductase family.

The protein localises to the cytoplasm. It carries out the reaction L-glutamate 5-semialdehyde + phosphate + NADP(+) = L-glutamyl 5-phosphate + NADPH + H(+). Its pathway is amino-acid biosynthesis; L-proline biosynthesis; L-glutamate 5-semialdehyde from L-glutamate: step 2/2. Functionally, catalyzes the NADPH-dependent reduction of L-glutamate 5-phosphate into L-glutamate 5-semialdehyde and phosphate. The product spontaneously undergoes cyclization to form 1-pyrroline-5-carboxylate. This is Gamma-glutamyl phosphate reductase from Aliivibrio fischeri (strain MJ11) (Vibrio fischeri).